We begin with the raw amino-acid sequence, 485 residues long: Betaine aldehyde dehydrogenase (485 aa).

K(+) contacts are provided by Thr23, Ile24, and Asp90. 147–149 (GAW) provides a ligand contact to NAD(+). Residue Lys159 is the Charge relay system of the active site. NAD(+) is bound by residues 173–176 (KPSE) and 226–229 (EVGT). Leu241 lines the K(+) pocket. The Proton acceptor role is filled by Glu247. Residues Gly249, Cys281, and Glu382 each contribute to the NAD(+) site. Cys281 functions as the Nucleophile in the catalytic mechanism. A Cysteine sulfenic acid (-SOH) modification is found at Cys281. Positions 452 and 455 each coordinate K(+). The active-site Charge relay system is the Glu459.

It belongs to the aldehyde dehydrogenase family. As to quaternary structure, dimer of dimers. K(+) is required as a cofactor.

The catalysed reaction is betaine aldehyde + NAD(+) + H2O = glycine betaine + NADH + 2 H(+). It participates in amine and polyamine biosynthesis; betaine biosynthesis via choline pathway; betaine from betaine aldehyde: step 1/1. Involved in the biosynthesis of the osmoprotectant glycine betaine. Catalyzes the irreversible oxidation of betaine aldehyde to the corresponding acid. This is Betaine aldehyde dehydrogenase from Marinomonas sp. (strain MWYL1).